The chain runs to 348 residues: Trans-L-3-hydroxyproline dehydratase (348 aa).

Cys101 serves as the catalytic Proton acceptor. Substrate is bound by residues 102–103 (GH), Asp263, and 268–269 (GS).

Belongs to the proline racemase family. In terms of assembly, homodimer.

It catalyses the reaction trans-3-hydroxy-L-proline = 1-pyrroline-2-carboxylate + H2O. In terms of biological role, catalyzes the dehydration of trans-3-hydroxy-L-proline to delta-1-pyrroline-2-carboxylate (Pyr2C). This chain is Trans-L-3-hydroxyproline dehydratase (l3hypdh), found in Xenopus tropicalis (Western clawed frog).